The chain runs to 366 residues: MAARTVIIDHGSGFLKAGTAGWNEPQMVFPNIVNYLPCKENPGPSYARRRVSLGIDICHPDTFSYPIERGRILNWEGVQYLWSFVLENHRREQEVPPVIITETPLREPADRKKMLEILFELLHVPSVLLADQLQMSLYASGLLTGVVVDSGYGLTRVQPFHQGRPLPASGKTLEFAGQDLSAYLLKSLFKEDCDRRCLFQLETVAVTQMNKCYVPQNLGEALDFRERQQSALDESNTYQLPDGSRVELTPMQRVAPEMFFSPQVFEQPGPSIPRAIVESVESCEISLRPLLVSHVMACGGNTLYPGFTKRLFRELMGDHVSSTKATVWEGSNRNFSVWLGASVVAHLSTYQSEWMSREEYGEHMRM.

The protein belongs to the actin family. In terms of tissue distribution, strongly expressed in testis and pancreas. Weak expression in placenta.

The protein resides in the cytoplasm. It is found in the cytoskeleton. The polypeptide is Actin-like protein 8 (ACTL8) (Homo sapiens (Human)).